The chain runs to 238 residues: UPF0173 metal-dependent hydrolase Helmi_16730 (238 aa).

Belongs to the UPF0173 family.

The chain is UPF0173 metal-dependent hydrolase Helmi_16730 from Heliobacterium modesticaldum (strain ATCC 51547 / Ice1).